Here is a 31-residue protein sequence, read N- to C-terminus: Cyclotide mech-6 (31 aa).

The cyclopeptide (Gly-Asn) cross-link spans 1–31 (GVIPCGESCVFIPCISSVVGCTCKNKVCYRN). Intrachain disulfides connect Cys5/Cys21, Cys9/Cys23, and Cys14/Cys28.

In terms of processing, this is a cyclic peptide. Post-translationally, contains 3 disulfide bonds.

In terms of biological role, probably participates in a plant defense mechanism (Potential). Binds to and induces leakage in phospholipd membranes, particularly ones containing 1-palmitoyl-2-oleophosphatidylethanolamine (POPE). This Melicytus chathamicus (Chatham Island mahoe) protein is Cyclotide mech-6.